Here is a 221-residue protein sequence, read N- to C-terminus: Glycerol metabolism activator (221 aa).

A Response regulatory domain is found at 3 to 120 (KILIADDHPL…QMTDAIEQIL (118 aa)). Position 55 is a 4-aspartylphosphate (aspartate 55). Residues 149 to 214 (APELLQALTR…QAILSAGDID (66 aa)) enclose the HTH luxR-type domain. The H-T-H motif DNA-binding region spans 173-192 (NKQIAYNLDIAETTVKAHVS).

Functionally, positive activator for glycerol metabolism. Regulates the expression of qedA in a positive manner and governs the expression of ADH I and ADH IIB. General regulator of quinoprotein ethanol oxidation and affects expression of ADH IIG activity but is not the sole regulator. This Pseudomonas putida (Arthrobacter siderocapsulatus) protein is Glycerol metabolism activator.